A 95-amino-acid polypeptide reads, in one-letter code: Endoribonuclease VapD homolog (95 aa).

Belongs to the VapD ribonuclease family. Homodimer.

Its function is as follows. Cleaves ssRNA, mostly between U:A. In Helicobacter pylori (strain ATCC 700392 / 26695) (Campylobacter pylori), this protein is Endoribonuclease VapD homolog.